Here is a 360-residue protein sequence, read N- to C-terminus: Peptide chain release factor 1 (360 aa).

Glutamine 235 bears the N5-methylglutamine mark.

It belongs to the prokaryotic/mitochondrial release factor family. Post-translationally, methylated by PrmC. Methylation increases the termination efficiency of RF1.

The protein resides in the cytoplasm. Its function is as follows. Peptide chain release factor 1 directs the termination of translation in response to the peptide chain termination codons UAG and UAA. The chain is Peptide chain release factor 1 from Mannheimia succiniciproducens (strain KCTC 0769BP / MBEL55E).